A 431-amino-acid polypeptide reads, in one-letter code: Enolase (431 aa).

Q167 is a binding site for (2R)-2-phosphoglycerate. E209 acts as the Proton donor in catalysis. Mg(2+) contacts are provided by D246, E289, and D316. 4 residues coordinate (2R)-2-phosphoglycerate: K341, R370, S371, and K392. K341 functions as the Proton acceptor in the catalytic mechanism.

Belongs to the enolase family. As to quaternary structure, component of the RNA degradosome, a multiprotein complex involved in RNA processing and mRNA degradation. Mg(2+) is required as a cofactor.

Its subcellular location is the cytoplasm. The protein resides in the secreted. It is found in the cell surface. The enzyme catalyses (2R)-2-phosphoglycerate = phosphoenolpyruvate + H2O. It functions in the pathway carbohydrate degradation; glycolysis; pyruvate from D-glyceraldehyde 3-phosphate: step 4/5. Its function is as follows. Catalyzes the reversible conversion of 2-phosphoglycerate (2-PG) into phosphoenolpyruvate (PEP). It is essential for the degradation of carbohydrates via glycolysis. This Shewanella baltica (strain OS223) protein is Enolase.